A 126-amino-acid chain; its full sequence is Holo-[acyl-carrier-protein] synthase (126 aa).

Residues aspartate 9 and glutamate 58 each contribute to the Mg(2+) site.

Belongs to the P-Pant transferase superfamily. AcpS family. It depends on Mg(2+) as a cofactor.

It is found in the cytoplasm. The enzyme catalyses apo-[ACP] + CoA = holo-[ACP] + adenosine 3',5'-bisphosphate + H(+). Its function is as follows. Transfers the 4'-phosphopantetheine moiety from coenzyme A to a Ser of acyl-carrier-protein. In Yersinia pestis bv. Antiqua (strain Angola), this protein is Holo-[acyl-carrier-protein] synthase.